The chain runs to 519 residues: Ribonuclease Y (519 aa).

A helical transmembrane segment spans residues 3-23 (LMIFAYIAIGAVLGAGTGYLL). In terms of domain architecture, KH spans 209–272 (TVTAVTLPSE…QVAKMALERL (64 aa)). Residues 335-428 (VLQHSLEVSA…VQAADSISGA (94 aa)) enclose the HD domain.

Belongs to the RNase Y family.

The protein localises to the cell membrane. Endoribonuclease that initiates mRNA decay. The sequence is that of Ribonuclease Y from Nitratidesulfovibrio vulgaris (strain ATCC 29579 / DSM 644 / CCUG 34227 / NCIMB 8303 / VKM B-1760 / Hildenborough) (Desulfovibrio vulgaris).